The primary structure comprises 130 residues: Ornithine decarboxylase antizyme (130 aa).

Over residues Ser-1 to Ala-14 the composition is skewed to basic and acidic residues. The tract at residues Ser-1 to Ser-56 is disordered. The segment covering Leu-17–Asp-27 has biased composition (polar residues). A compositionally biased stretch (low complexity) spans Ser-32 to Cys-51.

Belongs to the ODC antizyme family. As to quaternary structure, interacts with ODC1 and thereby sterically blocks ODC homodimerization.

Functionally, ornithine decarboxylase (ODC) antizyme protein that negatively regulates ODC activity and intracellular polyamine biosynthesis and uptake in response to increased intracellular polyamine levels. Binds to ODC monomers, inhibiting the assembly of the functional ODC homodimer, and targets the monomers for ubiquitin-independent proteolytic destruction by the 26S proteasome. This chain is Ornithine decarboxylase antizyme (Oda), found in Drosophila virilis (Fruit fly).